Reading from the N-terminus, the 341-residue chain is HTH-type transcriptional repressor PurR (341 aa).

The HTH lacI-type domain occupies 2 to 56; it reads ATIKDVAKRANVSTTTVSHVINKTRFVAEETRNAVWAAIKELHYSPSAVARSLKV. Residues 4–23 constitute a DNA-binding region (H-T-H motif); the sequence is IKDVAKRANVSTTTVSHVIN. Residues 48-56 mediate DNA binding; it reads SAVARSLKV. 5 residues coordinate hypoxanthine: tyrosine 73, arginine 190, threonine 192, phenylalanine 221, and aspartate 275.

As to quaternary structure, homodimer.

It participates in purine metabolism; purine nucleotide biosynthesis [regulation]. Functionally, is the main repressor of the genes involved in the de novo synthesis of purine nucleotides, regulating purB, purC, purEK, purF, purHD, purL, purMN and guaBA expression. PurR is allosterically activated to bind its cognate DNA by binding the purine corepressors, hypoxanthine or guanine, thereby effecting transcription repression. In Shigella dysenteriae serotype 1 (strain Sd197), this protein is HTH-type transcriptional repressor PurR.